We begin with the raw amino-acid sequence, 177 residues long: ATP synthase subunit delta (177 aa).

The protein belongs to the ATPase delta chain family. In terms of assembly, F-type ATPases have 2 components, F(1) - the catalytic core - and F(0) - the membrane proton channel. F(1) has five subunits: alpha(3), beta(3), gamma(1), delta(1), epsilon(1). F(0) has three main subunits: a(1), b(2) and c(10-14). The alpha and beta chains form an alternating ring which encloses part of the gamma chain. F(1) is attached to F(0) by a central stalk formed by the gamma and epsilon chains, while a peripheral stalk is formed by the delta and b chains.

The protein localises to the cell inner membrane. Functionally, f(1)F(0) ATP synthase produces ATP from ADP in the presence of a proton or sodium gradient. F-type ATPases consist of two structural domains, F(1) containing the extramembraneous catalytic core and F(0) containing the membrane proton channel, linked together by a central stalk and a peripheral stalk. During catalysis, ATP synthesis in the catalytic domain of F(1) is coupled via a rotary mechanism of the central stalk subunits to proton translocation. Its function is as follows. This protein is part of the stalk that links CF(0) to CF(1). It either transmits conformational changes from CF(0) to CF(1) or is implicated in proton conduction. This chain is ATP synthase subunit delta, found in Vibrio vulnificus (strain CMCP6).